A 661-amino-acid chain; its full sequence is UvrABC system protein B (661 aa).

The 387-residue stretch at 28–414 folds into the Helicase ATP-binding domain; the sequence is DGVNERKRHQ…HTDEMVEQII (387 aa). 41-48 provides a ligand contact to ATP; that stretch reads GATGTGKT. Positions 94–117 match the Beta-hairpin motif; the sequence is YYDYYQPEAYVPSTDTFIEKDASI. The Helicase C-terminal domain occupies 432–598; it reads QIDDLLSEIQ…TINKKIHDVI (167 aa). The segment at 603 to 624 is disordered; the sequence is ESDETNQQQQTELPKKMTKKER. The region spanning 625 to 660 is the UVR domain; the sequence is QKTIENIEKEMKKAAKDLDFEKATELRDMLFELKAE.

This sequence belongs to the UvrB family. In terms of assembly, forms a heterotetramer with UvrA during the search for lesions. Interacts with UvrC in an incision complex.

Its subcellular location is the cytoplasm. Functionally, the UvrABC repair system catalyzes the recognition and processing of DNA lesions. A damage recognition complex composed of 2 UvrA and 2 UvrB subunits scans DNA for abnormalities. Upon binding of the UvrA(2)B(2) complex to a putative damaged site, the DNA wraps around one UvrB monomer. DNA wrap is dependent on ATP binding by UvrB and probably causes local melting of the DNA helix, facilitating insertion of UvrB beta-hairpin between the DNA strands. Then UvrB probes one DNA strand for the presence of a lesion. If a lesion is found the UvrA subunits dissociate and the UvrB-DNA preincision complex is formed. This complex is subsequently bound by UvrC and the second UvrB is released. If no lesion is found, the DNA wraps around the other UvrB subunit that will check the other stand for damage. This chain is UvrABC system protein B, found in Staphylococcus epidermidis (strain ATCC 12228 / FDA PCI 1200).